We begin with the raw amino-acid sequence, 395 residues long: Ribosomal RNA small subunit methyltransferase H (395 aa).

S-adenosyl-L-methionine is bound by residues 101–103, aspartate 120, tyrosine 147, aspartate 171, and glutamine 178; that span reads GGH.

Belongs to the methyltransferase superfamily. RsmH family.

The protein localises to the cytoplasm. The catalysed reaction is cytidine(1402) in 16S rRNA + S-adenosyl-L-methionine = N(4)-methylcytidine(1402) in 16S rRNA + S-adenosyl-L-homocysteine + H(+). Functionally, specifically methylates the N4 position of cytidine in position 1402 (C1402) of 16S rRNA. This chain is Ribosomal RNA small subunit methyltransferase H, found in Mycobacterium ulcerans (strain Agy99).